Consider the following 274-residue polypeptide: 2,3,4,5-tetrahydropyridine-2,6-dicarboxylate N-succinyltransferase (274 aa).

Substrate contacts are provided by Arg-107 and Asp-144.

Belongs to the transferase hexapeptide repeat family. In terms of assembly, homotrimer.

The protein localises to the cytoplasm. It carries out the reaction (S)-2,3,4,5-tetrahydrodipicolinate + succinyl-CoA + H2O = (S)-2-succinylamino-6-oxoheptanedioate + CoA. Its pathway is amino-acid biosynthesis; L-lysine biosynthesis via DAP pathway; LL-2,6-diaminopimelate from (S)-tetrahydrodipicolinate (succinylase route): step 1/3. This is 2,3,4,5-tetrahydropyridine-2,6-dicarboxylate N-succinyltransferase from Cereibacter sphaeroides (strain ATCC 17029 / ATH 2.4.9) (Rhodobacter sphaeroides).